A 485-amino-acid polypeptide reads, in one-letter code: ATP-dependent 6-phosphofructokinase (485 aa).

Residues Gly-105, 171–172, and 196–199 contribute to the ATP site; these read RG and GDGT. Position 197 (Asp-197) interacts with Mg(2+). Substrate contacts are provided by residues 225-227, 270-272, Glu-323, and 378-381; these read TID, MGR, and YMIR. The active-site Proton acceptor is Asp-227. Residues 483–485 carry the Peroxisomal targeting signal motif; the sequence is SKL.

This sequence belongs to the phosphofructokinase type A (PFKA) family. PPi-dependent PFK group II subfamily. Atypical ATP-dependent clade 'X' sub-subfamily. In terms of assembly, homotetramer. The cofactor is Mg(2+).

The protein resides in the glycosome. The enzyme catalyses beta-D-fructose 6-phosphate + ATP = beta-D-fructose 1,6-bisphosphate + ADP + H(+). It participates in carbohydrate degradation; glycolysis; D-glyceraldehyde 3-phosphate and glycerone phosphate from D-glucose: step 3/4. Allosterically activated by AMP. Catalyzes the phosphorylation of D-fructose 6-phosphate to fructose 1,6-bisphosphate by ATP, the first committing step of glycolysis. In Trypanosoma cruzi (strain CL Brener), this protein is ATP-dependent 6-phosphofructokinase.